Reading from the N-terminus, the 457-residue chain is L-asparaginase-like protein GL17509 (457 aa).

The first 20 residues, 1–20 (MRYLCRAQLLSLLLLPLLKA), serve as a signal peptide directing secretion. 3 cysteine pairs are disulfide-bonded: Cys-72-Cys-78, Cys-172-Cys-188, and Cys-327-Cys-354.

It belongs to the Ntn-hydrolase family.

This chain is L-asparaginase-like protein GL17509, found in Drosophila persimilis (Fruit fly).